The primary structure comprises 398 residues: Thyrotropin-releasing hormone receptor (398 aa).

Topologically, residues 1–28 are extracellular; it reads MENETVSELNQTQLQPRAVVALEYQVVT. N-linked (GlcNAc...) asparagine glycosylation is found at N3 and N10. The helical transmembrane segment at 29–51 threads the bilayer; it reads ILLVLIICGLGIVGNIMVVLVVM. Residues 52-61 lie on the Cytoplasmic side of the membrane; that stretch reads RTKHMRTPTN. The chain crosses the membrane as a helical span at residues 62-83; the sequence is CYLVSLAVADLMVLVAAGLPNI. The Extracellular segment spans residues 84–99; that stretch reads TDSIYGSWVYGYVGCL. Cysteines 98 and 179 form a disulfide. The chain crosses the membrane as a helical span at residues 100 to 121; that stretch reads CITYLQYLGINASSCSITAFTI. Topologically, residues 122–144 are cytoplasmic; sequence ERYIAICHPIKAQFLCTFSRAKK. Residues 145-168 traverse the membrane as a helical segment; the sequence is IIIFVWAFTSLYCMLWFFLLDLNI. Residues 169–193 are Extracellular-facing; it reads STYKDAIVISCGYKISRNYYSPIYL. A helical transmembrane segment spans residues 194–215; that stretch reads MDFGVFYVVPMILATVLYGFIA. Topologically, residues 216-266 are cytoplasmic; sequence RILFLNPIPSDPKENSKTWKNDSTHQNTNLNVNTSNRCFNSTVSSRKQVTK. A helical transmembrane segment spans residues 267-288; the sequence is MLAVVVILFALLWMPYRTLVVV. At 289-296 the chain is on the extracellular side; it reads NSFLSSPF. Residues 297 to 319 traverse the membrane as a helical segment; the sequence is QENWFLLFCRICIYLNSAINPVI. The Cytoplasmic segment spans residues 320-398; it reads YNLMSQKFRA…LASEVSFSQS (79 aa).

The protein belongs to the G-protein coupled receptor 1 family.

The protein localises to the cell membrane. Receptor for thyrotropin-releasing hormone (TRH). Upon ligand binding, this G-protein-coupled receptor triggers activation of the phosphatidylinositol (IP3)-calcium-protein kinase C (PKC) pathway. This Homo sapiens (Human) protein is Thyrotropin-releasing hormone receptor (TRHR).